The following is a 727-amino-acid chain: BRCA1-A complex subunit RAP80 (727 aa).

The segment at 1–23 is disordered; the sequence is MPRRKKKIKEASESQNLEKKDLE. Residues 1 to 101 form a necessary for transcriptional repression region; sequence MPRRKKKIKE…SEQEAREVNN (101 aa). The span at 9–23 shows a compositional bias: basic and acidic residues; sequence KEASESQNLEKKDLE. Lys20 is covalently cross-linked (Glycyl lysine isopeptide (Lys-Gly) (interchain with G-Cter in SUMO2)). The residue at position 29 (Ser29) is a Phosphoserine. Lys31 is covalently cross-linked (Glycyl lysine isopeptide (Lys-Gly) (interchain with G-Cter in SUMO2)). Phosphoserine occurs at positions 44 and 46. The tract at residues 45 to 70 is disordered; sequence DSDGEETKEENGLQKTKTKQSNRSKC. Thr51 bears the Phosphothreonine mark. The segment covering 60-70 has biased composition (basic residues); sequence TKTKQSNRSKC. The short motif at 60–78 is the LR motif element; sequence TKTKQSNRSKCLAKRKVAH. Residues Lys75 and Lys90 each participate in a glycyl lysine isopeptide (Lys-Gly) (interchain with G-Cter in SUMO2) cross-link. UIM domains lie at 80 to 99 and 104 to 124; these read SEEE…AREV and EKEE…CWSS. Positions 97–103 are UIM-linker; it reads REVNNQE. The interval 100–200 is necessary for interaction with NR6A1 N-terminus; the sequence is NNQEEKEEEL…EEPVSGSSGS (101 aa). The disordered stretch occupies residues 133 to 206; that stretch reads PLAAELSSHS…SSGSWDQSSQ (74 aa). Residue Ser140 is modified to Phosphoserine. Positions 176-188 are enriched in basic and acidic residues; sequence AEQRKEPWDHNEN. Residues 195-206 are compositionally biased toward low complexity; that stretch reads SGSSGSWDQSSQ. Phosphoserine is present on Ser205. Residue Lys245 forms a Glycyl lysine isopeptide (Lys-Gly) (interchain with G-Cter in SUMO2) linkage. An AIR region spans residues 270-400; it reads TGGTVHYYWG…EEEPTTSRGQ (131 aa). The tract at residues 326 to 427 is disordered; it reads PRPPFLIQNE…SEGDNSVPTT (102 aa). The segment covering 355–364 has biased composition (basic and acidic residues); the sequence is DEAKEERQES. Ser379 carries the phosphoserine modification. Residues Lys382 and Lys387 each participate in a glycyl lysine isopeptide (Lys-Gly) (interchain with G-Cter in SUMO2) cross-link. Positions 400–508 are necessary for interaction with NR6A1 C-terminus; the sequence is QSSQGLFVEE…ENPPPAVSSS (109 aa). Ser402 bears the Phosphoserine mark. Lys436 participates in a covalent cross-link: Glycyl lysine isopeptide (Lys-Gly) (interchain with G-Cter in SUMO2). At Ser474 the chain carries Phosphoserine. The segment at 510–537 adopts a UBZ4-type zinc-finger fold; the sequence is RVSCPLCNQDFPPTKIEQHAMYCNGLME. Zn(2+)-binding residues include Cys513, Cys516, His528, and Cys532. Residues 513 to 590 are zinc-finger-like region; that stretch reads CPLCNQDFPP…GEYQCHVEAC (78 aa). Glycyl lysine isopeptide (Lys-Gly) (interchain with G-Cter in SUMO2) cross-links involve residues Lys552, Lys570, Lys595, and Lys617. A disordered region spans residues 607 to 654; sequence RPRVCAPVEGKQQQRLKKSKDKGHSQGRLLSLLEQSEHRTTGVEKKPK. Position 637 is a phosphoserine (Ser637). Over residues 641 to 654 the composition is skewed to basic and acidic residues; the sequence is QSEHRTTGVEKKPK. A Glycyl lysine isopeptide (Lys-Gly) (interchain with G-Cter in SUMO2) cross-link involves residue Lys652. Phosphoserine occurs at positions 665 and 689. A Glycyl lysine isopeptide (Lys-Gly) (interchain with G-Cter in SUMO2) cross-link involves residue Lys708.

Belongs to the RAP80 family. In terms of assembly, component of the ARISC complex, at least composed of UIMC1/RAP80, ABRAXAS1, BRCC3/BRCC36, BABAM2 and BABAM1/NBA1. Component of the BRCA1-A complex, at least composed of the BRCA1, BARD1, UIMC1/RAP80, ABRAXAS1, BRCC3/BRCC36, BABAM2 and BABAM1/NBA1. In the BRCA1-A complex, interacts directly with ABRAXAS1. Interacts with ESR1. Interacts with UBE2I. Interacts with NR6A1. Interacts with TSP57. Interacts with TRAIP. Post-translationally, sumoylated. In terms of processing, phosphorylated upon DNA damage by ATM or ATR.

The protein resides in the nucleus. Functionally, ubiquitin-binding protein. Specifically recognizes and binds 'Lys-63'-linked ubiquitin. Plays a central role in the BRCA1-A complex by specifically binding 'Lys-63'-linked ubiquitinated histones H2A and H2AX at DNA lesions sites, leading to target the BRCA1-BARD1 heterodimer to sites of DNA damage at double-strand breaks (DSBs). The BRCA1-A complex also possesses deubiquitinase activity that specifically removes 'Lys-63'-linked ubiquitin on histones H2A and H2AX. Also weakly binds monoubiquitin but with much less affinity than 'Lys-63'-linked ubiquitin. May interact with monoubiquitinated histones H2A and H2B; the relevance of such results is however unclear in vivo. Does not bind Lys-48'-linked ubiquitin. May indirectly act as a transcriptional repressor by inhibiting the interaction of NR6A1 with the corepressor NCOR1. The protein is BRCA1-A complex subunit RAP80 (Uimc1) of Mus musculus (Mouse).